The following is a 262-amino-acid chain: 5'-nucleotidase SurE (262 aa).

Positions 8, 9, 40, and 92 each coordinate a divalent metal cation.

It belongs to the SurE nucleotidase family. It depends on a divalent metal cation as a cofactor.

It is found in the cytoplasm. It carries out the reaction a ribonucleoside 5'-phosphate + H2O = a ribonucleoside + phosphate. In terms of biological role, nucleotidase that shows phosphatase activity on nucleoside 5'-monophosphates. The polypeptide is 5'-nucleotidase SurE (Xylella fastidiosa (strain 9a5c)).